Reading from the N-terminus, the 92-residue chain is UPF0250 protein XOO3732 (92 aa).

It belongs to the UPF0250 family.

The polypeptide is UPF0250 protein XOO3732 (Xanthomonas oryzae pv. oryzae (strain MAFF 311018)).